The following is a 159-amino-acid chain: Transcriptional repressor NrdR (159 aa).

A compositionally biased stretch (polar residues) spans 1–11 (MQCPSCQNTDS). The disordered stretch occupies residues 1–20 (MQCPSCQNTDSRVLESRSAD). The segment at 3–34 (CPSCQNTDSRVLESRSADSGRSVRRRRECLNC) is a zinc-finger region. Positions 49–139 (INVLKRSGAK…VYRQFNGIND (91 aa)) constitute an ATP-cone domain.

The protein belongs to the NrdR family. The cofactor is Zn(2+).

Functionally, negatively regulates transcription of bacterial ribonucleotide reductase nrd genes and operons by binding to NrdR-boxes. This is Transcriptional repressor NrdR from Prochlorococcus marinus (strain NATL1A).